The following is a 381-amino-acid chain: Beta-1,4-galactosyltransferase 5 (381 aa).

Residues 1–11 (MPTHLRFRRRS) lie on the Cytoplasmic side of the membrane. A helical; Signal-anchor for type II membrane protein transmembrane segment spans residues 12-32 (FLGLLFLFSLSTSALYFIYSA). Residues 33 to 381 (PGIVNEYLFM…SRDLAPVADY (349 aa)) are Lumenal-facing. N-linked (GlcNAc...) asparagine glycosylation is found at Asn73, Asn82, and Asn120. A disulfide bond links Cys106 and Cys151. UDP-alpha-D-galactose contacts are provided by residues 162–166 (PFRNR), 201–203 (FNR), 228–229 (VD), Tyr257, and Trp289. Cys222 and Cys241 form a disulfide bridge. Position 229 (Asp229) interacts with Mn(2+). N-acetyl-D-glucosamine is bound at residue 291–294 (GEDD). Mn(2+) is bound at residue His322. UDP-alpha-D-galactose is bound at residue 322–323 (HH). Arg333 lines the N-acetyl-D-glucosamine pocket. Asn366 carries N-linked (GlcNAc...) asparagine glycosylation.

This sequence belongs to the glycosyltransferase 7 family. The cofactor is Mn(2+).

Its subcellular location is the golgi apparatus. It localises to the golgi stack membrane. The enzyme catalyses a beta-D-glucosyl-(1&lt;-&gt;1')-N-acylsphing-4-enine + UDP-alpha-D-galactose = a beta-D-Gal-(1-&gt;4)-beta-D-Glc-(1&lt;-&gt;1)-Cer(d18:1(4E)) + UDP + H(+). It functions in the pathway protein modification; protein glycosylation. It participates in sphingolipid metabolism. Catalyzes the synthesis of lactosylceramide (LacCer) via the transfer of galactose from UDP-galactose to glucosylceramide (GlcCer). Required for proper patterning of the dorsoventral axis during embryogenesis through the regulation of BMP signaling. Plays a role in proteoglycan glycosylation that is required for BMP-dependent specification of the dorsoventral axis. This chain is Beta-1,4-galactosyltransferase 5 (b4galt5), found in Danio rerio (Zebrafish).